A 79-amino-acid chain; its full sequence is uncharacterized protein (79 aa).

A helical transmembrane segment spans residues 53-73; sequence LFFAYMVAYIGFGILSIGMIV.

It localises to the membrane. This is an uncharacterized protein from Escherichia coli O157:H7.